The following is a 176-amino-acid chain: NAD(P)H-quinone oxidoreductase subunit 6, chloroplastic (176 aa).

5 helical membrane-spanning segments follow: residues Phe10 to Pro30, Pro32 to Leu52, Ala61 to Met81, Leu92 to Ile112, and Phe152 to Ser172.

The protein belongs to the complex I subunit 6 family. NDH is composed of at least 16 different subunits, 5 of which are encoded in the nucleus.

It is found in the plastid. Its subcellular location is the chloroplast thylakoid membrane. The catalysed reaction is a plastoquinone + NADH + (n+1) H(+)(in) = a plastoquinol + NAD(+) + n H(+)(out). It carries out the reaction a plastoquinone + NADPH + (n+1) H(+)(in) = a plastoquinol + NADP(+) + n H(+)(out). NDH shuttles electrons from NAD(P)H:plastoquinone, via FMN and iron-sulfur (Fe-S) centers, to quinones in the photosynthetic chain and possibly in a chloroplast respiratory chain. The immediate electron acceptor for the enzyme in this species is believed to be plastoquinone. Couples the redox reaction to proton translocation, and thus conserves the redox energy in a proton gradient. The polypeptide is NAD(P)H-quinone oxidoreductase subunit 6, chloroplastic (ndhG) (Lobularia maritima (Sweet alyssum)).